The chain runs to 132 residues: NADH-quinone oxidoreductase subunit A (132 aa).

3 helical membrane passes run 7–27 (YWVL…MIGV), 62–82 (FYLI…LYAW), and 91–111 (WTGY…LAYL).

This sequence belongs to the complex I subunit 3 family. As to quaternary structure, NDH-1 is composed of 14 different subunits. Subunits NuoA, H, J, K, L, M, N constitute the membrane sector of the complex.

The protein localises to the cell inner membrane. It catalyses the reaction a quinone + NADH + 5 H(+)(in) = a quinol + NAD(+) + 4 H(+)(out). Its function is as follows. NDH-1 shuttles electrons from NADH, via FMN and iron-sulfur (Fe-S) centers, to quinones in the respiratory chain. The immediate electron acceptor for the enzyme in this species is believed to be ubiquinone. Couples the redox reaction to proton translocation (for every two electrons transferred, four hydrogen ions are translocated across the cytoplasmic membrane), and thus conserves the redox energy in a proton gradient. This chain is NADH-quinone oxidoreductase subunit A, found in Acidiphilium cryptum (strain JF-5).